The following is a 463-amino-acid chain: Glutamate--tRNA ligase (463 aa).

Residues 8-18 (PSPTGYLHIGG) carry the 'HIGH' region motif. Residues 236–240 (RLSKR) carry the 'KMSKS' region motif. Residue K239 participates in ATP binding.

Belongs to the class-I aminoacyl-tRNA synthetase family. Glutamate--tRNA ligase type 1 subfamily. In terms of assembly, monomer.

It is found in the cytoplasm. The enzyme catalyses tRNA(Glu) + L-glutamate + ATP = L-glutamyl-tRNA(Glu) + AMP + diphosphate. In terms of biological role, catalyzes the attachment of glutamate to tRNA(Glu) in a two-step reaction: glutamate is first activated by ATP to form Glu-AMP and then transferred to the acceptor end of tRNA(Glu). This is Glutamate--tRNA ligase from Nitrosomonas europaea (strain ATCC 19718 / CIP 103999 / KCTC 2705 / NBRC 14298).